The following is a 68-amino-acid chain: Large ribosomal subunit protein uL29c (68 aa).

This sequence belongs to the universal ribosomal protein uL29 family.

The protein localises to the plastid. The protein resides in the chloroplast. The polypeptide is Large ribosomal subunit protein uL29c (Pyropia yezoensis (Susabi-nori)).